The following is a 214-amino-acid chain: Glutathione S-transferase F11 (214 aa).

In terms of domain architecture, GST N-terminal spans 2–82 (VVKVYGQIKA…YYATKYADQG (81 aa)). Residues 11–12 (AA), 40–41 (QK), 53–54 (QV), and 66–67 (ES) each bind glutathione. The GST C-terminal domain maps to 89–214 (TLEGRAIVDQ…WKKLMELAAY (126 aa)).

The protein belongs to the GST superfamily. Phi family.

It is found in the cytoplasm. It localises to the cytosol. The enzyme catalyses RX + glutathione = an S-substituted glutathione + a halide anion + H(+). In terms of biological role, may be involved in the conjugation of reduced glutathione to a wide number of exogenous and endogenous hydrophobic electrophiles and have a detoxification role against certain herbicides. The protein is Glutathione S-transferase F11 of Arabidopsis thaliana (Mouse-ear cress).